Reading from the N-terminus, the 480-residue chain is Glutamate--tRNA ligase (480 aa).

A 'HIGH' region motif is present at residues 9–19 (PSPTGNLHIGT). Residues 247–251 (KLSKR) carry the 'KMSKS' region motif. Residue lysine 250 coordinates ATP.

The protein belongs to the class-I aminoacyl-tRNA synthetase family. Glutamate--tRNA ligase type 1 subfamily. Monomer.

Its subcellular location is the cytoplasm. It catalyses the reaction tRNA(Glu) + L-glutamate + ATP = L-glutamyl-tRNA(Glu) + AMP + diphosphate. In terms of biological role, catalyzes the attachment of glutamate to tRNA(Glu) in a two-step reaction: glutamate is first activated by ATP to form Glu-AMP and then transferred to the acceptor end of tRNA(Glu). The chain is Glutamate--tRNA ligase from Nostoc sp. (strain PCC 7120 / SAG 25.82 / UTEX 2576).